The primary structure comprises 286 residues: 4-diphosphocytidyl-2-C-methyl-D-erythritol kinase (286 aa).

Residue Lys-10 is part of the active site. 100–110 (PMGSGLGGGSS) provides a ligand contact to ATP. Residue Asp-142 is part of the active site.

It belongs to the GHMP kinase family. IspE subfamily. Homodimer.

It carries out the reaction 4-CDP-2-C-methyl-D-erythritol + ATP = 4-CDP-2-C-methyl-D-erythritol 2-phosphate + ADP + H(+). It participates in isoprenoid biosynthesis; isopentenyl diphosphate biosynthesis via DXP pathway; isopentenyl diphosphate from 1-deoxy-D-xylulose 5-phosphate: step 3/6. Functionally, catalyzes the phosphorylation of the position 2 hydroxy group of 4-diphosphocytidyl-2C-methyl-D-erythritol. In Buchnera aphidicola subsp. Acyrthosiphon pisum (strain APS) (Acyrthosiphon pisum symbiotic bacterium), this protein is 4-diphosphocytidyl-2-C-methyl-D-erythritol kinase.